Here is an 86-residue protein sequence, read N- to C-terminus: MSINKIFEESWKNRLTKYEIARIISARALQLAMGASPLIDTNNLPFNDVISIAEEELKRGVLPITVRRVYPNGKIELVSVKKVEFK.

This sequence belongs to the archaeal Rpo6/eukaryotic RPB6 RNA polymerase subunit family. In terms of assembly, part of the RNA polymerase complex.

The protein resides in the cytoplasm. The enzyme catalyses RNA(n) + a ribonucleoside 5'-triphosphate = RNA(n+1) + diphosphate. Its function is as follows. DNA-dependent RNA polymerase (RNAP) catalyzes the transcription of DNA into RNA using the four ribonucleoside triphosphates as substrates. The sequence is that of DNA-directed RNA polymerase subunit Rpo6 from Sulfurisphaera tokodaii (strain DSM 16993 / JCM 10545 / NBRC 100140 / 7) (Sulfolobus tokodaii).